A 450-amino-acid polypeptide reads, in one-letter code: UDP-N-acetylglucosamine--peptide N-acetylglucosaminyltransferase stabilizing protein GtfB (450 aa).

The protein belongs to the GtfB family. In terms of assembly, forms a heterotetramer with 2 subunits each of GtfA and GtfB. Part of the accessory SecA2/SecY2 protein translocation apparatus required to export cell wall protein GspB.

It localises to the cell membrane. Its pathway is protein modification; protein glycosylation. In terms of biological role, required for polymorphic O-glycosylation of GspB, a serine-rich repeat cell wall protein encoded upstream in the same operon. A substrate-binding protein that is part of the accessory SecA2/SecY2 system specifically required to export GspB. The GtfA-GtfB complex adds GlcNAc from UDP-GlcNAc to GspB, attaching the first sugar residue. Upon coexpression in E.coli with GtfA glycosylates GspB constructs. Binds the GspB protein substrate; alone this subunit only recognizes partially glycosylated GspB, but is constrained by GtfA to also recognize unglycosylated protein. The enzyme probably modifies its tertiary conformation by opening and closing its intersubunit interfaces to accomodate the increasingly glycosylated substrate. The protein is UDP-N-acetylglucosamine--peptide N-acetylglucosaminyltransferase stabilizing protein GtfB of Streptococcus gordonii.